Consider the following 2517-residue polypeptide: Protein capicua homolog (2517 aa).

Disordered stretches follow at residues methionine 1–tyrosine 197, leucine 300–proline 325, proline 342–lysine 483, glutamate 531–serine 579, serine 608–arginine 640, and valine 658–valine 767. A compositionally biased stretch (acidic residues) spans glutamate 57–alanine 67. Residues glutamate 91–arginine 101 are compositionally biased toward basic and acidic residues. Low complexity-rich tracts occupy residues threonine 158–threonine 167 and leucine 300–serine 313. Positions histidine 396–proline 405 are enriched in basic and acidic residues. Positions leucine 414–serine 428 are enriched in pro residues. Low complexity predominate over residues glycine 451–alanine 477. Over residues serine 608 to valine 619 the composition is skewed to polar residues. The span at aspartate 677–alanine 686 shows a compositional bias: pro residues. Polar residues predominate over residues threonine 698–valine 707. The span at glycine 726–alanine 735 shows a compositional bias: gly residues. 2 positions are modified to phosphoserine: serine 776 and serine 780. Disordered regions lie at residues isoleucine 812–glycine 842, proline 955–arginine 1110, cysteine 1179–valine 1220, serine 1235–glycine 1274, serine 1290–glutamate 1347, arginine 1379–threonine 1539, and isoleucine 1595–glycine 1628. Residues glutamate 937–proline 955 are interaction with ATXN1. Residues aspartate 959 to lysine 981 show a composition bias toward polar residues. Serine 1055 and serine 1082 each carry phosphoserine. Composition is skewed to basic and acidic residues over residues proline 1087 to arginine 1110, cysteine 1179 to serine 1188, and glycine 1200 to methionine 1209. An Omega-N-methylarginine modification is found at arginine 1099. A DNA-binding region (HMG box) is located at residues isoleucine 1109–lysine 1177. Position 1186 is a phosphoserine (serine 1186). The span at serine 1235–cysteine 1245 shows a compositional bias: polar residues. Serine 1271 carries the post-translational modification Phosphoserine. Over residues glycine 1305–glycine 1323 the composition is skewed to low complexity. 3 positions are modified to phosphoserine: serine 1340, serine 1345, and serine 1405. Residues proline 1418–proline 1430 show a composition bias toward pro residues. Positions serine 1439–alanine 1456 are enriched in low complexity. Polar residues predominate over residues threonine 1457–glycine 1474. Serine 1609, serine 1630, and serine 1648 each carry phosphoserine. Position 1772 is an asymmetric dimethylarginine (arginine 1772). Residues glutamine 1799 to proline 1818 are disordered. Arginine 1843 is modified (omega-N-methylarginine). Disordered stretches follow at residues alanine 2039–alanine 2064, serine 2100–glutamate 2342, and alanine 2430–arginine 2517. Residues alanine 2051 to alanine 2064 are compositionally biased toward low complexity. 2 stretches are compositionally biased toward pro residues: residues glycine 2110 to proline 2119 and proline 2136 to proline 2145. Low complexity predominate over residues glutamate 2146–serine 2155. Position 2177 is an N6-acetyllysine (lysine 2177). Positions proline 2198 to alanine 2209 are enriched in pro residues. Threonine 2200 carries the phosphothreonine modification. Residue serine 2203 is modified to Phosphoserine. The span at valine 2210–glycine 2225 shows a compositional bias: low complexity. The segment covering lysine 2249–glutamate 2278 has biased composition (basic and acidic residues). Phosphoserine is present on residues serine 2260, serine 2282, serine 2287, serine 2291, serine 2298, and serine 2306. Position 2307 is a phosphothreonine (threonine 2307). Phosphoserine occurs at positions 2311 and 2318. Positions alanine 2457–threonine 2469 are enriched in pro residues. Residue serine 2504 is modified to Phosphoserine.

In terms of assembly, found in a complex with ATXN1 and ATXN1L. Interacts with ATXN1. In terms of tissue distribution, expressed in fetal brain.

Its subcellular location is the nucleus. Transcriptional repressor which plays a role in development of the central nervous system (CNS). In concert with ATXN1 and ATXN1L, involved in brain development. This Homo sapiens (Human) protein is Protein capicua homolog (CIC).